Here is a 228-residue protein sequence, read N- to C-terminus: Glycosylphosphatidylinositol-anchored high density lipoprotein-binding protein 1 (228 aa).

Residues 1-22 (MKALRAVLLILLLSGQPGSGWA) form the signal peptide. Positions 21–32 (WAQEDGDADPEP) are disordered. Residues 24–48 (EDGDADPEPENYNYDDDDDEEEEEE) are important for LPL transport to the lumenal surface of endothelial cells. Residues 24 to 49 (EDGDADPEPENYNYDDDDDEEEEEET) are compositionally biased toward acidic residues. Y35 bears the Sulfotyrosine mark. The UPAR/Ly6 domain occupies 61 to 148 (LQCYFCQVLH…PWQNPQVQNP (88 aa)). Disulfide bonds link C63/C88, C66/C75, C81/C109, C113/C129, and C130/C135. A glycan (N-linked (GlcNAc...) asparagine) is linked at N76. Residues 102–108 (LTTYSMW) form an important for interaction with LPL region. Residues 145–200 (VQNPLGGRADSPLESGTRHPQGGKFSHPQVVKAAHPQSDGANLPKSGKANQPQGSG) form a disordered region. G198 carries GPI-anchor amidated glycine lipidation. A propeptide spans 199-228 (SGAGYPSGWTKFGNIALLLSFFTCLWASGA) (removed in mature form).

Mostly monomer, but also homodimer and homooligomer. Interacts with lipoprotein lipase (LPL). Interacts with high affinity with high-density lipoprotein (HDL). Interacts with chylomicrons. Interacts with APOA5. Post-translationally, glycosylation of Asn-76 is critical for cell surface localization. In terms of processing, sulfation of a Tyr in the N-terminal acidic region increases the affinity for LPL. Detected in fat tissue. Detected on the luminal surface of capillary endothelial cells in heart, skeletal muscle and brown adipose tissue (at protein level). Detected in heart and brown adipose tissue. Expressed at lower levels in lung and liver.

The protein resides in the apical cell membrane. It is found in the basolateral cell membrane. Its subcellular location is the cell membrane. Mediates the transport of lipoprotein lipase LPL from the basolateral to the apical surface of endothelial cells in capillaries. Anchors LPL on the surface of endothelial cells in the lumen of blood capillaries. Thereby, plays an important role in lipolytic processing of chylomicrons by LPL, triglyceride metabolism and lipid homeostasis. Binds chylomicrons and phospholipid particles that contain APOA5. Binds high-density lipoprotein (HDL) and plays a role in the uptake of lipids from HDL. The protein is Glycosylphosphatidylinositol-anchored high density lipoprotein-binding protein 1 of Mus musculus (Mouse).